Reading from the N-terminus, the 495-residue chain is MDSVRRTYTIMRGRHIDKRVPSKEFLSALDKAETAVRLPTGTGKDCGNPSWKRSLPHVLVASLTSLLFGYHLGVVNETLESISIDLGFSGNTIAEGLVVSTCLGGAFIGSLFSGLVADGVGRRRAFQLSALPMIVGASVSASTESLMGMLLGRFLVGIGMGIGPSVTALYVTEVSPAYVRGTYGSSTQIATCIGLLGSLFAGIPAKDNLGWWRICFWISTVPAAMLAVFMELCVESPQWLFKRGRAAEAEAVFEKLLGGSYVKAAMAELVKSDRGDDADSAKLSELLFGRSFRVVFIGSTLFALQQLSGINAVFYFSSTVFKKAGVPSASANICVGVCNLLGSTVAVVLMDKLGRKVLLIGSFAGMAVSLGLQAIAYTSLPSPFGTLFLSVGGMLLFVLSFATGAGPVPSLLLSEICPGRLRATALAVCLAVHWVINFFVGLLFLRMLEQLGSVLLNAIFGFFCVVAVIFVQKNVVETKGKSLQEIEISLLSSTQ.

A run of 12 helical transmembrane segments spans residues 55–75 (LPHVLVASLTSLLFGYHLGVV), 97–117 (LVVSTCLGGAFIGSLFSGLVA), 131–151 (LPMIVGASVSASTESLMGMLL), 154–174 (FLVGIGMGIGPSVTALYVTEV), 183–203 (YGSSTQIATCIGLLGSLFAGI), 214–234 (ICFWISTVPAAMLAVFMELCV), 294–314 (VVFIGSTLFALQQLSGINAVF), 330–350 (SANICVGVCNLLGSTVAVVLM), 357–377 (VLLIGSFAGMAVSLGLQAIAY), 384–404 (FGTLFLSVGGMLLFVLSFATG), 425–445 (ALAVCLAVHWVINFFVGLLFL), and 451–471 (LGSVLLNAIFGFFCVVAVIFV).

It belongs to the major facilitator superfamily. Sugar transporter (TC 2.A.1.1) family.

The protein resides in the plastid. The protein localises to the chloroplast membrane. Functionally, may be involved in the efflux of glucose towards the cytosol. The protein is Probable plastidic glucose transporter 3 of Arabidopsis thaliana (Mouse-ear cress).